Consider the following 334-residue polypeptide: Myo-inositol 2-dehydrogenase (334 aa).

The protein belongs to the Gfo/Idh/MocA family.

The enzyme catalyses myo-inositol + NAD(+) = scyllo-inosose + NADH + H(+). It functions in the pathway polyol metabolism; myo-inositol metabolism. Catalyzes the NAD(+)-dependent oxidation of myo-inositol (MI) to 2-keto-myo-inositol (scyllo-inosose), and thus probably functions in a myo-inositol degradation pathway together with IolM, IolN and IolO. Has no activity with scyllo-inositol and much reduced activity (78-fold lower catalytic efficiency) with 1D-chiro-inositol. The protein is Myo-inositol 2-dehydrogenase of Thermotoga maritima (strain ATCC 43589 / DSM 3109 / JCM 10099 / NBRC 100826 / MSB8).